The sequence spans 526 residues: Microphthalmia-associated transcription factor (526 aa).

The segment at 1–54 is disordered; the sequence is MQSESGIVPDFEVGEEFHEEPKTYYELKSQPLKSSSSAEHPGASKPPISSSSMT. The residue at position 5 (Ser-5) is a Phosphoserine; by MTOR. The span at 15–25 shows a compositional bias: basic and acidic residues; that stretch reads EEFHEEPKTYY. Positions 41–54 are enriched in low complexity; it reads PGASKPPISSSSMT. Ser-180 is subject to Phosphoserine; by MAPK. The tract at residues 224-295 is transactivation; it reads DDVIDDIISL…PNIKRELTAC (72 aa). Phosphoserine; by MARK3 is present on Ser-280. Lys-289 participates in a covalent cross-link: Glycyl lysine isopeptide (Lys-Gly) (interchain with G-Cter in SUMO). Positions 311-364 constitute a bHLH domain; that stretch reads QKKDNHNLIERRRRFNINDRIKELGTLIPKSNDPDMRWNKGTILKASVDYIRKL. Residues 355-402 are a coiled coil; sequence KASVDYIRKLQREQQRAKELENRQKKLEHANRHLLLRIQELEMQARAH. Positions 374-395 are leucine-zipper; the sequence is LENRQKKLEHANRHLLLRIQEL. Residues 401 to 431 are DNA-binding regulation; that stretch reads AHGLSLIPSTGLCSPDLVNRIIKQEPVLENC. Ser-405 is subject to Phosphoserine; by GSK3. A Phosphoserine modification is found at Ser-414. A Glycyl lysine isopeptide (Lys-Gly) (interchain with G-Cter in SUMO) cross-link involves residue Lys-423. Position 491 is a phosphoserine (Ser-491). The disordered stretch occupies residues 496 to 526; sequence TDPLLSSVSPGASKTSSRRSSMSMEETEHTC. Residues 499-509 are compositionally biased toward polar residues; sequence LLSSVSPGASK. The residue at position 516 (Ser-516) is a Phosphoserine; by RPS6KA1.

Belongs to the MiT/TFE family. As to quaternary structure, homodimer or heterodimer; dimerization is mediated via the coiled coil region. Efficient DNA binding requires dimerization with another bHLH protein. Binds DNA in the form of homodimer or heterodimer with either TFE3, TFEB or TFEC. Interacts with small GTPases Rag (RagA/RRAGA, RagB/RRAGB, RagC/RRAGC and/or RagD/RRAGD); promoting its recruitment to lysosomal membrane in the presence of nutrients. Interacts with KARS1. Identified in a complex with HINT1 and CTNNB1. Interacts with VSX2. Post-translationally, when nutrients are present, phosphorylation by MTOR at Ser-5 via non-canonical mTORC1 pathway promotes ubiquitination by the SCF(BTRC) complex, followed by degradation. Phosphorylation at Ser-405 significantly enhances the ability to bind the tyrosinase promoter. Phosphorylation by MARK3/cTAK1 at Ser-280 promotes association with 14-3-3/YWHA adapters and retention in the cytosol. Phosphorylated at Ser-180 and Ser-516 following KIT signaling, triggering a short live activation: Phosphorylation at Ser-180 and Ser-516 by MAPK and RPS6KA1, respectively, activate the transcription factor activity but also promote ubiquitination and subsequent degradation by the proteasome. Phosphorylated in response to blue light (415nm). In terms of processing, ubiquitinated by the SCF(BTRC) and SCF(FBXW11) complexes following phosphorylation ar Ser-5 by MTOR, leading to its degradation by the proteasome. Ubiquitinated following phosphorylation at Ser-180, leading to subsequent degradation by the proteasome. Deubiquitinated by USP13, preventing its degradation. Expressed in melanocytes (at protein level). As to expression, expressed in the retinal pigment epithelium, brain, and placenta. Expressed in the kidney. In terms of tissue distribution, expressed in the kidney and retinal pigment epithelium. Expressed in the kidney. As to expression, expressed in melanocytes.

The protein resides in the nucleus. Its subcellular location is the cytoplasm. The protein localises to the lysosome membrane. Its function is as follows. Transcription factor that acts as a master regulator of melanocyte survival and differentiation as well as melanosome biogenesis. Binds to M-boxes (5'-TCATGTG-3') and symmetrical DNA sequences (E-boxes) (5'-CACGTG-3') found in the promoter of pigmentation genes, such as tyrosinase (TYR). Involved in the cellular response to amino acid availability by acting downstream of MTOR: in the presence of nutrients, MITF phosphorylation by MTOR promotes its inactivation. Upon starvation or lysosomal stress, inhibition of MTOR induces MITF dephosphorylation, resulting in transcription factor activity. Plays an important role in melanocyte development by regulating the expression of tyrosinase (TYR) and tyrosinase-related protein 1 (TYRP1). Plays a critical role in the differentiation of various cell types, such as neural crest-derived melanocytes, mast cells, osteoclasts and optic cup-derived retinal pigment epithelium. This chain is Microphthalmia-associated transcription factor, found in Homo sapiens (Human).